The sequence spans 57 residues: uncharacterized protein (57 aa).

Residues 9-45 (NWQEEIRKIIIERVRREAKKRLLEETRKLRMEMKSSK) adopt a coiled-coil conformation.

This is an uncharacterized protein from Archaeoglobus fulgidus (strain ATCC 49558 / DSM 4304 / JCM 9628 / NBRC 100126 / VC-16).